Reading from the N-terminus, the 159-residue chain is Phosphopantetheine adenylyltransferase (159 aa).

A substrate-binding site is contributed by Thr10. Residues 10–11 (TF) and His18 contribute to the ATP site. 3 residues coordinate substrate: Lys42, Leu74, and Arg88. Residues 89–91 (GLR), Glu99, and 124–130 (FAYVSSS) contribute to the ATP site.

It belongs to the bacterial CoaD family. In terms of assembly, homohexamer. Requires Mg(2+) as cofactor.

It localises to the cytoplasm. It catalyses the reaction (R)-4'-phosphopantetheine + ATP + H(+) = 3'-dephospho-CoA + diphosphate. It functions in the pathway cofactor biosynthesis; coenzyme A biosynthesis; CoA from (R)-pantothenate: step 4/5. Functionally, reversibly transfers an adenylyl group from ATP to 4'-phosphopantetheine, yielding dephospho-CoA (dPCoA) and pyrophosphate. The chain is Phosphopantetheine adenylyltransferase from Thioalkalivibrio sulfidiphilus (strain HL-EbGR7).